Here is a 319-residue protein sequence, read N- to C-terminus: tRNA uridine(34) hydroxylase (319 aa).

The region spanning 124-218 (LDEDTVILDA…YGKNEETKGE (95 aa)) is the Rhodanese domain. Cysteine 178 acts as the Cysteine persulfide intermediate in catalysis.

This sequence belongs to the TrhO family.

The catalysed reaction is uridine(34) in tRNA + AH2 + O2 = 5-hydroxyuridine(34) in tRNA + A + H2O. In terms of biological role, catalyzes oxygen-dependent 5-hydroxyuridine (ho5U) modification at position 34 in tRNAs. The protein is tRNA uridine(34) hydroxylase of Listeria monocytogenes serotype 4b (strain CLIP80459).